Consider the following 258-residue polypeptide: Chymotrypsin-like elastase family member 1 (258 aa).

The signal sequence occupies residues 1 to 8 (MLVLYGHS). Residues 9–18 (TQDLPETNAR) constitute a propeptide, activation peptide. In terms of domain architecture, Peptidase S1 spans 19–256 (VVGGTEAGRN…YISWINNVIA (238 aa)). A disulfide bridge links Cys48 with Cys64. His63 functions as the Charge relay system in the catalytic mechanism. Ca(2+)-binding residues include Asp77, Asn79, Gln82, and Glu87. The N-linked (GlcNAc...) asparagine glycan is linked to Asn79. Asp111 (charge relay system) is an active-site residue. Cystine bridges form between Cys145–Cys212, Cys176–Cys192, and Cys202–Cys232. The active-site Charge relay system is the Ser206. N-linked (GlcNAc...) asparagine glycosylation is present at Asn233.

It belongs to the peptidase S1 family. Elastase subfamily. Requires Ca(2+) as cofactor. As to expression, basal layers of epidermis (at protein level). Not expressed in the pancreas.

The protein resides in the secreted. The catalysed reaction is Hydrolysis of proteins, including elastin. Preferential cleavage: Ala-|-Xaa.. Functionally, serine proteases that hydrolyze many proteins in addition to elastin. The polypeptide is Chymotrypsin-like elastase family member 1 (CELA1) (Homo sapiens (Human)).